Consider the following 275-residue polypeptide: uncharacterized protein (275 aa).

The 162-residue stretch at 1-162 folds into the ABC transmembrane type-1 domain; that stretch reads NLFSVIVSLI…ITSYWTEVQR (162 aa). 3 consecutive transmembrane segments (helical) span residues 21–41, 106–126, and 137–157; these read LYLV…GNIM, IMNL…YYLM, and FAYV…TSYW.

Its subcellular location is the cell membrane. This is an uncharacterized protein from Staphylococcus epidermidis.